Reading from the N-terminus, the 137-residue chain is Protein ApaG (137 aa).

Residues proline 2–glutamine 126 enclose the ApaG domain.

The polypeptide is Protein ApaG (Acidovorax sp. (strain JS42)).